A 101-amino-acid chain; its full sequence is uncharacterized protein (101 aa).

This is an uncharacterized protein from Acanthamoeba polyphaga mimivirus (APMV).